A 305-amino-acid polypeptide reads, in one-letter code: DNA-directed RNA polymerase 35 kDa subunit (305 aa).

Belongs to the poxviridae DNA-directed RNA polymerase 35 kDa subunit family. As to quaternary structure, the DNA-dependent RNA polymerase used for intermediate and late genes expression consists of eight subunits 147 kDa, 133 kDa, 35 kDa, 30 kDa, 22 kDa, 19 kDa, 18 kDa and 7 kDa totalling more than 500 kDa in mass. The same holoenzyme, with the addition of the transcription-specificity factor RAP94, is used for early gene expression.

The protein resides in the virion. It catalyses the reaction RNA(n) + a ribonucleoside 5'-triphosphate = RNA(n+1) + diphosphate. Part of the DNA-dependent RNA polymerase which catalyzes the transcription of viral DNA into RNA using the four ribonucleoside triphosphates as substrates. Responsible for the transcription of early, intermediate and late genes. DNA-dependent RNA polymerase associates with the early transcription factor (ETF), itself composed of D6 and A7, thereby allowing the early genes transcription. Late transcription, and probably also intermediate transcription, require newly synthesized RNA polymerase. This is DNA-directed RNA polymerase 35 kDa subunit (OPG156) from Bos taurus (Bovine).